The following is a 156-amino-acid chain: Small ribosomal subunit protein bS16 (156 aa).

The span at 124–135 shows a compositional bias: low complexity; sequence AAKAAEAETPAE. Residues 124–156 form a disordered region; it reads AAKAAEAETPAEVQHDDEKVELADVEESAPESV. The span at 136-145 shows a compositional bias: basic and acidic residues; the sequence is VQHDDEKVEL. Residues 146–156 show a composition bias toward acidic residues; it reads ADVEESAPESV.

It belongs to the bacterial ribosomal protein bS16 family.

The protein is Small ribosomal subunit protein bS16 of Bifidobacterium animalis subsp. lactis (strain AD011).